A 365-amino-acid polypeptide reads, in one-letter code: DNA replication and repair protein RecF (365 aa).

30–37 (GANGQGKT) is an ATP binding site.

It belongs to the RecF family.

It localises to the cytoplasm. Its function is as follows. The RecF protein is involved in DNA metabolism; it is required for DNA replication and normal SOS inducibility. RecF binds preferentially to single-stranded, linear DNA. It also seems to bind ATP. The protein is DNA replication and repair protein RecF of Geobacter metallireducens (strain ATCC 53774 / DSM 7210 / GS-15).